A 277-amino-acid polypeptide reads, in one-letter code: Small ribosomal subunit protein mS23 (277 aa).

Disordered stretches follow at residues 48–85 (APSHPVVKQRMRTVPGKSKPQLEIKSSAGRKQTSKKPS) and 232–277 (LAAF…GPPI). A compositionally biased stretch (acidic residues) spans 244-269 (ESGESEDEIPLIEEEDAIGASEESET).

The protein belongs to the mitochondrion-specific ribosomal protein mS23 family. As to quaternary structure, component of the mitochondrial small ribosomal subunit.

The protein localises to the mitochondrion. In Ajellomyces capsulatus (strain NAm1 / WU24) (Darling's disease fungus), this protein is Small ribosomal subunit protein mS23 (RSM25).